The following is a 306-amino-acid chain: Glutathione transport system permease protein GsiC (306 aa).

Topologically, residues 1–8 are cytoplasmic; it reads MLNYVIKR. Residues 9 to 29 traverse the membrane as a helical segment; the sequence is LLGLIPTLFIVSVLVFLFVHM. Topologically, residues 30–102 are periplasmic; that stretch reads LPGDPARLIA…SRFMPTLWLT (73 aa). Positions 95 to 292 constitute an ABC transmembrane type-1 domain; sequence FMPTLWLTIT…LEFILINLVV (198 aa). A helical transmembrane segment spans residues 103-123; that stretch reads ITSMVWAVIFGMAAGIIAAVW. Over 124–134 the chain is Cytoplasmic; that stretch reads RNRWPDRLSMT. A helical membrane pass occupies residues 135 to 155; that stretch reads IAVSGISFPAFALGMLLIQVF. The Periplasmic portion of the chain corresponds to 156–168; that stretch reads SVELGWLPTVGAD. Residues 169-189 form a helical membrane-spanning segment; the sequence is SWQHYILPSLTLGAAVAAVMA. At 190 to 228 the chain is on the cytoplasmic side; that stretch reads RFTRASFVDVLSEDYMRTARAKGVSETWVVLKHGLRNAM. A helical membrane pass occupies residues 229–249; sequence IPVVTMMGLQFGFLLGGSIVV. Topologically, residues 250-277 are periplasmic; it reads EKVFNWPGLGRLLVDSVEMRDYPVIQAE. Residues 278–298 traverse the membrane as a helical segment; sequence ILLFSLEFILINLVVDVLYAA. Topologically, residues 299-306 are cytoplasmic; it reads INPAIRYK.

This sequence belongs to the binding-protein-dependent transport system permease family. In terms of assembly, the complex is composed of two ATP-binding proteins (GsiA), two transmembrane proteins (GsiC and GsiD) and a solute-binding protein (GsiB).

The protein localises to the cell inner membrane. Part of the ABC transporter complex GsiABCD involved in glutathione import. Probably responsible for the translocation of the substrate across the membrane. The protein is Glutathione transport system permease protein GsiC of Escherichia coli O1:K1 / APEC.